A 356-amino-acid chain; its full sequence is tRNA N6-adenosine threonylcarbamoyltransferase (356 aa).

Positions 115 and 119 each coordinate Fe cation. Residues 138–142, Asp-171, Gly-184, and Asn-283 each bind substrate; that span reads LVSGG. Asp-311 lines the Fe cation pocket.

The protein belongs to the KAE1 / TsaD family. Fe(2+) serves as cofactor.

It localises to the cytoplasm. The catalysed reaction is L-threonylcarbamoyladenylate + adenosine(37) in tRNA = N(6)-L-threonylcarbamoyladenosine(37) in tRNA + AMP + H(+). Its function is as follows. Required for the formation of a threonylcarbamoyl group on adenosine at position 37 (t(6)A37) in tRNAs that read codons beginning with adenine. Is involved in the transfer of the threonylcarbamoyl moiety of threonylcarbamoyl-AMP (TC-AMP) to the N6 group of A37, together with TsaE and TsaB. TsaD likely plays a direct catalytic role in this reaction. The protein is tRNA N6-adenosine threonylcarbamoyltransferase of Prochlorococcus marinus (strain MIT 9301).